Consider the following 386-residue polypeptide: Succinyl-diaminopimelate desuccinylase (386 aa).

H76 provides a ligand contact to Zn(2+). The active site involves D78. Zn(2+) is bound at residue D110. The active-site Proton acceptor is the E144. The Zn(2+) site is built by E145, E173, and H359.

The protein belongs to the peptidase M20A family. DapE subfamily. In terms of assembly, homodimer. It depends on Zn(2+) as a cofactor. Requires Co(2+) as cofactor.

The enzyme catalyses N-succinyl-(2S,6S)-2,6-diaminopimelate + H2O = (2S,6S)-2,6-diaminopimelate + succinate. It participates in amino-acid biosynthesis; L-lysine biosynthesis via DAP pathway; LL-2,6-diaminopimelate from (S)-tetrahydrodipicolinate (succinylase route): step 3/3. In terms of biological role, catalyzes the hydrolysis of N-succinyl-L,L-diaminopimelic acid (SDAP), forming succinate and LL-2,6-diaminopimelate (DAP), an intermediate involved in the bacterial biosynthesis of lysine and meso-diaminopimelic acid, an essential component of bacterial cell walls. This chain is Succinyl-diaminopimelate desuccinylase, found in Chromohalobacter salexigens (strain ATCC BAA-138 / DSM 3043 / CIP 106854 / NCIMB 13768 / 1H11).